The chain runs to 161 residues: MSIVTKSIVNADAEARYLSPGELDRIKSFVSGGERRLRIAQILTENRERLVKQAGEQVFQKRPDVVSPGGNAYGQELTATCLRDLDYYLRLVTYGIVSGDVTPIEEIGVIGAREMYKSLGTPIEGITEGIRALKSGASSLLSGEDAAEAGSYFDYVVGALS.

Asparagine 71 carries the post-translational modification N4-methylasparagine. A (2R,3E)-phycocyanobilin-binding site is contributed by cysteine 81.

It belongs to the phycobiliprotein family. As to quaternary structure, component of the phycobilisome. Heterodimer of an alpha and a beta chain. In terms of processing, contains one covalently linked bilin chromophore.

It localises to the cellular thylakoid membrane. In terms of biological role, light-harvesting photosynthetic bile pigment-protein from the phycobiliprotein complex. Allophycocyanin has a maximum absorption at approximately 650 nanometers. The polypeptide is Allophycocyanin alpha chain 1 (Microchaete diplosiphon (Fremyella diplosiphon)).